The sequence spans 315 residues: DNA-directed RNA polymerase subunit alpha (315 aa).

The tract at residues 1–228 (MIGMEKPKIE…EHLELFISLT (228 aa)) is alpha N-terminal domain (alpha-NTD). The segment at 245–315 (RNKLMEMTIE…FGLSLRQPDD (71 aa)) is alpha C-terminal domain (alpha-CTD).

The protein belongs to the RNA polymerase alpha chain family. As to quaternary structure, homodimer. The RNAP catalytic core consists of 2 alpha, 1 beta, 1 beta' and 1 omega subunit. When a sigma factor is associated with the core the holoenzyme is formed, which can initiate transcription.

The enzyme catalyses RNA(n) + a ribonucleoside 5'-triphosphate = RNA(n+1) + diphosphate. DNA-dependent RNA polymerase catalyzes the transcription of DNA into RNA using the four ribonucleoside triphosphates as substrates. This Symbiobacterium thermophilum (strain DSM 24528 / JCM 14929 / IAM 14863 / T) protein is DNA-directed RNA polymerase subunit alpha.